Here is a 489-residue protein sequence, read N- to C-terminus: Arginine biosynthesis bifunctional protein ArgJ 2, mitochondrial (489 aa).

The transit peptide at 1 to 11 directs the protein to the mitochondrion; sequence MLLISRIGARH. 5 residues coordinate substrate: T205, K234, T245, E341, and N484. T245 functions as the Nucleophile in the catalytic mechanism.

This sequence belongs to the ArgJ family. Heterodimer of an alpha and a beta chain. In terms of processing, the alpha and beta chains are autoproteolytically processed from a single precursor protein within the mitochondrion.

The protein resides in the mitochondrion matrix. The enzyme catalyses N(2)-acetyl-L-ornithine + L-glutamate = N-acetyl-L-glutamate + L-ornithine. It catalyses the reaction L-glutamate + acetyl-CoA = N-acetyl-L-glutamate + CoA + H(+). It functions in the pathway amino-acid biosynthesis; L-arginine biosynthesis; L-ornithine and N-acetyl-L-glutamate from L-glutamate and N(2)-acetyl-L-ornithine (cyclic): step 1/1. Its pathway is amino-acid biosynthesis; L-arginine biosynthesis; N(2)-acetyl-L-ornithine from L-glutamate: step 1/4. Functionally, catalyzes two activities which are involved in the cyclic version of arginine biosynthesis: the synthesis of acetylglutamate from glutamate and acetyl-CoA, and of ornithine by transacetylation between acetylornithine and glutamate. In Sclerotinia sclerotiorum (strain ATCC 18683 / 1980 / Ss-1) (White mold), this protein is Arginine biosynthesis bifunctional protein ArgJ 2, mitochondrial.